The chain runs to 1274 residues: Paired amphipathic helix protein Sin3a (1274 aa).

Disordered regions lie at residues 1 to 26 (MKRR…STEA) and 85 to 110 (HHHP…PPVA). A Phosphoserine modification is found at S10. One can recognise a PAH 1 domain in the interval 119–189 (QRLKVEDALS…MGFNTFLPPG (71 aa)). Residues 119 to 196 (QRLKVEDALS…PPGYKIEVQT (78 aa)) form an interaction with HCFC1 region. Residues K122 and K134 each participate in a glycyl lysine isopeptide (Lys-Gly) (interchain with G-Cter in SUMO2) cross-link. The segment at 205–297 (PGQVHQIPTH…ISLGTAPSLQ (93 aa)) is disordered. The tract at residues 205–479 (PGQVHQIPTH…KVRKALRSAE (275 aa)) is interaction with REST. Residues 228 to 237 (SQPSSQSAPT) show a composition bias toward low complexity. Residues 252–266 (KPSQLQAHTPASQQT) show a composition bias toward polar residues. Positions 267–282 (PPLPPYASPRSPPVQP) are enriched in pro residues. S277 is subject to Phosphoserine. T284 is subject to Phosphothreonine. Positions 284 to 297 (TPVTISLGTAPSLQ) are enriched in polar residues. Residues 300–383 (QPVEFNHAIN…SEFGQFLPDA (84 aa)) enclose the PAH 2 domain. The segment at 398-443 (DSVRNDHGGTVKKPQLNNKPQRPSQNGCQIRRHSGTGATPPVKKKP) is disordered. Residues 412–425 (QLNNKPQRPSQNGC) are compositionally biased toward polar residues. A PAH 3 domain is found at 457–526 (SKHGVGTESL…NWFKNFLGYK (70 aa)). The segment at 459–526 (HGVGTESLFF…NWFKNFLGYK (68 aa)) is interaction with SAP30. Residue K470 is modified to N6-acetyllysine. Residues 524 to 851 (GYKESVHLES…EMDVDEATGA (328 aa)) form an interaction with NCOR1 region. The interactions with SUDS3 and SAP130 stretch occupies residues 525 to 660 (YKESVHLESF…KFRLDNTLGG (136 aa)). A Glycyl lysine isopeptide (Lys-Gly) (interchain with G-Cter in SUMO2) cross-link involves residue K564. Residues 688–830 (NPSIAVPIVL…IPDLLFAQRG (143 aa)) are interactions with HDAC1 and ARID4B. The residue at position 833 (S833) is a Phosphoserine. The span at 835–847 (VEEEEEEEMDVDE) shows a compositional bias: acidic residues. The disordered stretch occupies residues 835–865 (VEEEEEEEMDVDEATGAPKKHNGVGGSPPKS). The residue at position 861 (S861) is a Phosphoserine. An N6-acetyllysine mark is found at K866 and K876. The segment at 889-968 (VNNNWYIFMR…YYPAFLDMVR (80 aa)) is interaction with OGT. Residues 904–933 (CLRLLRICSQAERQIEEENREREWEREVLG) are a coiled coil. S941, S1090, and S1113 each carry phosphoserine. The segment at 1137–1157 (CQRGREQQEKEGKEGNSKKTM) is disordered. Positions 1139–1157 (RGREQQEKEGKEGNSKKTM) are enriched in basic and acidic residues.

In terms of assembly, interacts with ARID4B, BRMS1L, HCFC1, HDAC1, HDAC2, MXI1, SAP30L, SAP130, SFPQ and TOPORS. Interacts with OGT (via TPRs 1-6); the interaction mediates transcriptional repression in parallel with histone deacetylase. Interacts with BAZ2A, MXD1, MXD3, MXD4, MBD2, DACH1, NCOR1, NR4A2, REST, RLIM, SAP30, SETDB1, SMYD2, and SUDS3. Interacts with PHF12 in a complex composed of HDAC1, PHF12 and SAP30. Interacts with TET1; the interaction recruits SIN3A to gene promoters. The large PER complex involved in the histone deacetylation is composed of at least HDAC1, PER2, SFPQ and SIN3A. Interacts with KLF11. Interacts with PPHLN1. Found in a complex with YY1, GON4L and HDAC1. Interacts (via PAH2) with FOXK1. Interacts with FOXK2. Found in a complex composed of at least SINHCAF, SIN3A, HDAC1, SAP30, RBBP4, OGT and TET1. Interacts with SINHCAF. Interacts with SPHK2. SUMO1 sumoylated by TOPORS. Probably desumoylated by SENP2. In terms of tissue distribution, widely expressed. Highest levels in testis, lung and thymus. Expressed at relatively high levels throughout brain development. In adult mice, expression is high in neurogenic regions such as the subventricular zone, rostral migratory stream, olfactory bulb and dentate gyrus.

The protein localises to the nucleus. The protein resides in the nucleolus. Functionally, acts as a transcriptional repressor. Corepressor for REST. Interacts with MXI1 to repress MYC responsive genes and antagonize MYC oncogenic activities. Also interacts with MXD1-MAX heterodimers to repress transcription by tethering SIN3A to DNA. Acts cooperatively with OGT to repress transcription in parallel with histone deacetylation. Involved in the control of the circadian rhythms. Required for the transcriptional repression of circadian target genes, such as PER1, mediated by the large PER complex through histone deacetylation. Cooperates with FOXK1 to regulate cell cycle progression probably by repressing cell cycle inhibitor genes expression. Required for cortical neuron differentiation and callosal axon elongation. This is Paired amphipathic helix protein Sin3a (Sin3a) from Mus musculus (Mouse).